The chain runs to 233 residues: Type IV secretion system protein PtlE homolog (233 aa).

The chain crosses the membrane as a helical span at residues 42–62 (VAWAALAVTALSLIAIATMLP).

This sequence belongs to the virB8 family.

Its subcellular location is the cell inner membrane. The protein is Type IV secretion system protein PtlE homolog (ptlE) of Bordetella parapertussis (strain 12822 / ATCC BAA-587 / NCTC 13253).